The following is a 176-amino-acid chain: Peptidyl-prolyl cis-trans isomerase cyp6 (176 aa).

The 164-residue stretch at 10 to 173 (FFDIAVNGQH…AKIEITDCGE (164 aa)) folds into the PPIase cyclophilin-type domain.

This sequence belongs to the cyclophilin-type PPIase family.

The enzyme catalyses [protein]-peptidylproline (omega=180) = [protein]-peptidylproline (omega=0). PPIases accelerate the folding of proteins. It catalyzes the cis-trans isomerization of proline imidic peptide bonds in oligopeptides. The sequence is that of Peptidyl-prolyl cis-trans isomerase cyp6 (cyp6) from Rhizopus delemar (strain RA 99-880 / ATCC MYA-4621 / FGSC 9543 / NRRL 43880) (Mucormycosis agent).